The chain runs to 532 residues: O-phosphoserine--tRNA(Cys) ligase (532 aa).

Substrate is bound by residues 188 to 190 (HMT), 233 to 235 (SAS), 275 to 276 (YY), and Asn327.

It belongs to the class-II aminoacyl-tRNA synthetase family. O-phosphoseryl-tRNA(Cys) synthetase subfamily. In terms of assembly, homotetramer. Interacts with SepCysS.

The enzyme catalyses tRNA(Cys) + O-phospho-L-serine + ATP = O-phospho-L-seryl-tRNA(Cys) + AMP + diphosphate. Functionally, catalyzes the attachment of O-phosphoserine (Sep) to tRNA(Cys). The polypeptide is O-phosphoserine--tRNA(Cys) ligase (Methanocella arvoryzae (strain DSM 22066 / NBRC 105507 / MRE50)).